Here is a 311-residue protein sequence, read N- to C-terminus: Meteorin-like protein (311 aa).

The span at 1–13 shows a compositional bias: low complexity; sequence MRGAARAAWGRAG. Positions 1–24 are disordered; that stretch reads MRGAARAAWGRAGQPWPRPPAPGP. The N-terminal stretch at 1–45 is a signal peptide; it reads MRGAARAAWGRAGQPWPRPPAPGPPPPPLPLLLLLLAGLLGGAGA. Intrachain disulfides connect Cys52–Cys75, Cys107–Cys143, Cys188–Cys260, Cys191–Cys284, and Cys201–Cys306.

Belongs to the meteorin family. In terms of tissue distribution, highly expressed in the skeletal muscle, in subcutaneous adipose tissue, epididymal white adipose tissue depots and heart. Also expressed in brown adipose tissues and kidney.

The protein resides in the secreted. Hormone induced following exercise or cold exposure that promotes energy expenditure. Induced either in the skeletal muscle after exercise or in adipose tissue following cold exposure and is present in the circulation. Able to stimulate energy expenditure associated with the browning of the white fat depots and improves glucose tolerance. Does not promote an increase in a thermogenic gene program via direct action on adipocytes, but acts by stimulating several immune cell subtypes to enter the adipose tissue and activate their prothermogenic actions. Stimulates an eosinophil-dependent increase in IL4 expression and promotes alternative activation of adipose tissue macrophages, which are required for the increased expression of the thermogenic and anti-inflammatory gene programs in fat. Required for some cold-induced thermogenic responses, suggesting a role in metabolic adaptations to cold temperatures. In Homo sapiens (Human), this protein is Meteorin-like protein (METRNL).